The primary structure comprises 302 residues: 4-hydroxy-tetrahydrodipicolinate synthase (302 aa).

Threonine 55 is a binding site for pyruvate. Catalysis depends on tyrosine 144, which acts as the Proton donor/acceptor. Lysine 172 functions as the Schiff-base intermediate with substrate in the catalytic mechanism. Position 214 (valine 214) interacts with pyruvate.

The protein belongs to the DapA family. In terms of assembly, homotetramer; dimer of dimers.

The protein localises to the cytoplasm. The catalysed reaction is L-aspartate 4-semialdehyde + pyruvate = (2S,4S)-4-hydroxy-2,3,4,5-tetrahydrodipicolinate + H2O + H(+). It functions in the pathway amino-acid biosynthesis; L-lysine biosynthesis via DAP pathway; (S)-tetrahydrodipicolinate from L-aspartate: step 3/4. Catalyzes the condensation of (S)-aspartate-beta-semialdehyde [(S)-ASA] and pyruvate to 4-hydroxy-tetrahydrodipicolinate (HTPA). This Prochlorococcus marinus (strain NATL2A) protein is 4-hydroxy-tetrahydrodipicolinate synthase.